A 56-amino-acid polypeptide reads, in one-letter code: Small ribosomal subunit protein uS14 (56 aa).

Positions 21, 24, 39, and 42 each coordinate Zn(2+).

The protein belongs to the universal ribosomal protein uS14 family. Component of the 40S small ribosomal subunit. It depends on Zn(2+) as a cofactor.

It is found in the cytoplasm. Its subcellular location is the cytosol. It localises to the rough endoplasmic reticulum. Its function is as follows. Component of the small ribosomal subunit. The ribosome is a large ribonucleoprotein complex responsible for the synthesis of proteins in the cell. The protein is Small ribosomal subunit protein uS14 (rps29) of Hippocampus comes (Tiger tail seahorse).